The sequence spans 386 residues: Cytochrome b (386 aa).

4 helical membrane passes run 32-52, 76-98, 113-133, and 179-199; these read FGSL…TLAM, WLIR…LHVG, TWII…LGYV, and FFAL…MHLI. His82 and His96 together coordinate heme b. Residues His183 and His197 each contribute to the heme b site. His202 provides a ligand contact to a ubiquinone. A run of 4 helical transmembrane segments spans residues 226–246, 290–310, 322–342, and 349–369; these read YIFK…LFVF, LLGV…PITD, LSKV…QLGA, and FIEF…VIMP.

This sequence belongs to the cytochrome b family. As to quaternary structure, fungal cytochrome b-c1 complex contains 10 subunits; 3 respiratory subunits, 2 core proteins and 5 low-molecular weight proteins. Cytochrome b-c1 complex is a homodimer. It depends on heme b as a cofactor.

Its subcellular location is the mitochondrion inner membrane. Its function is as follows. Component of the ubiquinol-cytochrome c reductase complex (complex III or cytochrome b-c1 complex) that is part of the mitochondrial respiratory chain. The b-c1 complex mediates electron transfer from ubiquinol to cytochrome c. Contributes to the generation of a proton gradient across the mitochondrial membrane that is then used for ATP synthesis. The protein is Cytochrome b (cob) of Talaromyces marneffei (Penicillium marneffei).